We begin with the raw amino-acid sequence, 462 residues long: Exodeoxyribonuclease 7 large subunit (462 aa).

The protein belongs to the XseA family. In terms of assembly, heterooligomer composed of large and small subunits.

The protein resides in the cytoplasm. It catalyses the reaction Exonucleolytic cleavage in either 5'- to 3'- or 3'- to 5'-direction to yield nucleoside 5'-phosphates.. Its function is as follows. Bidirectionally degrades single-stranded DNA into large acid-insoluble oligonucleotides, which are then degraded further into small acid-soluble oligonucleotides. The polypeptide is Exodeoxyribonuclease 7 large subunit (Pectobacterium carotovorum subsp. carotovorum (strain PC1)).